A 437-amino-acid polypeptide reads, in one-letter code: Methylenetetrahydrofolate--tRNA-(uracil-5-)-methyltransferase TrmFO (437 aa).

Gly10 to Gly15 lines the FAD pocket.

This sequence belongs to the MnmG family. TrmFO subfamily. Requires FAD as cofactor.

The protein resides in the cytoplasm. The catalysed reaction is uridine(54) in tRNA + (6R)-5,10-methylene-5,6,7,8-tetrahydrofolate + NADH + H(+) = 5-methyluridine(54) in tRNA + (6S)-5,6,7,8-tetrahydrofolate + NAD(+). It catalyses the reaction uridine(54) in tRNA + (6R)-5,10-methylene-5,6,7,8-tetrahydrofolate + NADPH + H(+) = 5-methyluridine(54) in tRNA + (6S)-5,6,7,8-tetrahydrofolate + NADP(+). Catalyzes the folate-dependent formation of 5-methyl-uridine at position 54 (M-5-U54) in all tRNAs. In Lysinibacillus sphaericus (strain C3-41), this protein is Methylenetetrahydrofolate--tRNA-(uracil-5-)-methyltransferase TrmFO.